The following is a 551-amino-acid chain: Frizzled-2 (551 aa).

Residues methionine 1–glycine 26 form the signal peptide. The Extracellular segment spans residues glutamate 27–arginine 231. Residues proline 33–glutamine 152 enclose the FZ domain. Cystine bridges form between cysteine 38/cysteine 99, cysteine 46/cysteine 92, cysteine 83/cysteine 120, cysteine 109/cysteine 149, and cysteine 113/cysteine 137. An N-linked (GlcNAc...) asparagine glycan is attached at asparagine 52. An N-linked (GlcNAc...) asparagine glycan is attached at asparagine 153. The helical transmembrane segment at isoleucine 232 to tyrosine 252 threads the bilayer. The Cytoplasmic portion of the chain corresponds to leucine 253 to proline 265. A helical membrane pass occupies residues isoleucine 266 to leucine 286. Over glycine 287–cysteine 313 the chain is Extracellular. A helical membrane pass occupies residues threonine 314 to leucine 334. Topologically, residues serine 335–glutamine 356 are cytoplasmic. A helical transmembrane segment spans residues tyrosine 357 to glycine 377. Over glutamine 378–glycine 400 the chain is Extracellular. Residues phenylalanine 401 to phenylalanine 421 form a helical membrane-spanning segment. Residues valine 422–arginine 447 lie on the Cytoplasmic side of the membrane. A helical transmembrane segment spans residues isoleucine 448–tyrosine 468. Residues glutamate 469–threonine 505 lie on the Extracellular side of the membrane. The helical transmembrane segment at valine 506 to tryptophan 526 threads the bilayer. At serine 527 to tryptophan 534 the chain is on the cytoplasmic side. The short motif at lysine 529–tryptophan 534 is the Lys-Thr-X-X-X-Trp motif, mediates interaction with the PDZ domain of Dvl family members element. The PDZ-binding signature appears at threonine 549–valine 551.

Belongs to the G-protein coupled receptor Fz/Smo family. As to expression, widely expressed, especially in the eye anlage, otic vesicle and developing somites.

The protein resides in the membrane. Its subcellular location is the cell membrane. Its function is as follows. Receptor for Wnt proteins. Most of frizzled receptors are coupled to the beta-catenin canonical signaling pathway, which leads to the activation of disheveled proteins, inhibition of GSK-3 kinase, nuclear accumulation of beta-catenin and activation of Wnt target genes. A second signaling pathway involving PKC and calcium fluxes has been seen for some family members, but it is not yet clear if it represents a distinct pathway or if it can be integrated in the canonical pathway, as PKC seems to be required for Wnt-mediated inactivation of GSK-3 kinase. Both pathways seem to involve interactions with G-proteins. May be involved in transduction and intercellular transmission of polarity information during tissue morphogenesis and/or in differentiated tissues. The chain is Frizzled-2 (fzd2) from Xenopus laevis (African clawed frog).